The primary structure comprises 378 residues: MAILDTKSSRWIPHNLLFLLLLLLLQSVPYGFGQTQTTPPGTTKTKPNDPVVVVITVLFLVIFFMVFGSIFCRRSNAQFSRSSIFRSTDADAESQVVRIRRLTARGLDAEAIETFPTFLYSEVKAVRIGKGGVECAVCLCEFEDDETLRLMPPCCHVFHADCVDVWLSEHSTCPLCRADLVLNQQGDDDDSTESYSGTDPGTISSSTDPERGMVLESSDAHLLDAVTWSNSNITPRSKSTGLSSWQITGILFPRSHSTGHSLIQPAGNLDRFTLRLPDDVRRQLMKTSRTMGHVALLPQARSSRSGYRSGSVGSERSAFPYGRKSNNNNRRLHSLSFSFSFRSGSVRSTFSGDAPKNLPTSIEAGERSFERLRPDERV.

An N-terminal signal peptide occupies residues 1–33 (MAILDTKSSRWIPHNLLFLLLLLLLQSVPYGFG). The chain crosses the membrane as a helical span at residues 51–71 (VVVVITVLFLVIFFMVFGSIF). Residues 135–177 (CAVCLCEFEDDETLRLMPPCCHVFHADCVDVWLSEHSTCPLCR) form an RING-type; atypical zinc finger. Disordered regions lie at residues 187-211 (DDDD…DPER), 300-326 (ARSS…RKSN), and 350-378 (FSGD…DERV). Residues 193-207 (ESYSGTDPGTISSST) show a composition bias toward polar residues. Positions 301-317 (RSSRSGYRSGSVGSERS) are enriched in low complexity. A compositionally biased stretch (basic and acidic residues) spans 364–378 (AGERSFERLRPDERV).

It belongs to the RING-type zinc finger family. ATL subfamily.

It localises to the membrane. The enzyme catalyses S-ubiquitinyl-[E2 ubiquitin-conjugating enzyme]-L-cysteine + [acceptor protein]-L-lysine = [E2 ubiquitin-conjugating enzyme]-L-cysteine + N(6)-ubiquitinyl-[acceptor protein]-L-lysine.. Its pathway is protein modification; protein ubiquitination. In terms of biological role, E3 ubiquitin-protein ligase able to catalyze polyubiquitination with ubiquitin-conjugating enzyme E2 UBC8 in vitro. May be involved in the early steps of the plant defense signaling pathway. The sequence is that of E3 ubiquitin-protein ligase ATL9 (ATL9) from Arabidopsis thaliana (Mouse-ear cress).